A 216-amino-acid polypeptide reads, in one-letter code: Noggin-1 (216 aa).

The N-terminal stretch at 1 to 18 (MDFPRFLLSAYLLLLSFA) is a signal peptide. Asn-55 carries an N-linked (GlcNAc...) asparagine glycan.

This sequence belongs to the noggin family. In terms of assembly, homodimer; disulfide-linked.

The protein resides in the secreted. In terms of biological role, inhibitor of bone morphogenetic proteins (BMP) signaling. May play an important role in the dorsoventral patterning of the embryo. This chain is Noggin-1 (nog1), found in Danio rerio (Zebrafish).